The chain runs to 216 residues: uncharacterized protein (216 aa).

In terms of domain architecture, Cupin type-2 spans 125–176 (YPKSTNFDSHYHDCDEYWVIIEGAGTVVVGSRSFEVEVGDCVAIGMGHHHDL).

This is an uncharacterized protein from Sinorhizobium fredii (strain NBRC 101917 / NGR234).